A 319-amino-acid chain; its full sequence is Acetyl-coenzyme A carboxylase carboxyl transferase subunit alpha (319 aa).

The region spanning 35 to 296 (NIDEEVHRLR…KAQLLADLAD (262 aa)) is the CoA carboxyltransferase C-terminal domain.

This sequence belongs to the AccA family. Acetyl-CoA carboxylase is a heterohexamer composed of biotin carboxyl carrier protein (AccB), biotin carboxylase (AccC) and two subunits each of ACCase subunit alpha (AccA) and ACCase subunit beta (AccD).

The protein resides in the cytoplasm. The enzyme catalyses N(6)-carboxybiotinyl-L-lysyl-[protein] + acetyl-CoA = N(6)-biotinyl-L-lysyl-[protein] + malonyl-CoA. The protein operates within lipid metabolism; malonyl-CoA biosynthesis; malonyl-CoA from acetyl-CoA: step 1/1. Functionally, component of the acetyl coenzyme A carboxylase (ACC) complex. First, biotin carboxylase catalyzes the carboxylation of biotin on its carrier protein (BCCP) and then the CO(2) group is transferred by the carboxyltransferase to acetyl-CoA to form malonyl-CoA. In Klebsiella pneumoniae (strain 342), this protein is Acetyl-coenzyme A carboxylase carboxyl transferase subunit alpha.